We begin with the raw amino-acid sequence, 363 residues long: Phosphoserine aminotransferase (363 aa).

Arg41 lines the L-glutamate pocket. Pyridoxal 5'-phosphate contacts are provided by residues 75 to 76 (AS), Trp100, Thr155, Asp175, and Gln198. Lys199 carries the N6-(pyridoxal phosphate)lysine modification. 239–240 (NT) serves as a coordination point for pyridoxal 5'-phosphate.

It belongs to the class-V pyridoxal-phosphate-dependent aminotransferase family. SerC subfamily. As to quaternary structure, homodimer. The cofactor is pyridoxal 5'-phosphate.

It localises to the cytoplasm. It carries out the reaction O-phospho-L-serine + 2-oxoglutarate = 3-phosphooxypyruvate + L-glutamate. The catalysed reaction is 4-(phosphooxy)-L-threonine + 2-oxoglutarate = (R)-3-hydroxy-2-oxo-4-phosphooxybutanoate + L-glutamate. The protein operates within amino-acid biosynthesis; L-serine biosynthesis; L-serine from 3-phospho-D-glycerate: step 2/3. Functionally, catalyzes the reversible conversion of 3-phosphohydroxypyruvate to phosphoserine and of 3-hydroxy-2-oxo-4-phosphonooxybutanoate to phosphohydroxythreonine. The sequence is that of Phosphoserine aminotransferase from Streptococcus suis (strain 98HAH33).